The following is a 45-amino-acid chain: MQVLSSLKSAKNRHPDCQVVRRRGRVFVINKTDGRFKAVQGKKKK.

Belongs to the bacterial ribosomal protein bL36 family.

In Psychrobacter sp. (strain PRwf-1), this protein is Large ribosomal subunit protein bL36.